Here is a 927-residue protein sequence, read N- to C-terminus: Protein LONGIFOLIA 1 (927 aa).

Disordered regions lie at residues 41–198 (TGDE…EGRR), 210–257 (YDER…GHRR), 460–588 (AQKV…SDSN), and 605–626 (YERNSDITEQHTPKQRSPDLGM). Positions 86–114 (SSESSSRLSFSSSPCSSSFSSADISTTAS) are enriched in low complexity. Polar residues predominate over residues 115–125 (QFEQPGLSNGE). Positions 146–165 (DIRELVRSSIHKETRTRDEE) are enriched in basic and acidic residues. Residues 182–193 (KESSPSRNSNEW) are compositionally biased toward polar residues. Basic and acidic residues predominate over residues 210-226 (YDERETRKTGAKLKETP). Positions 232-245 (SRSNSFRSARSSCS) are enriched in low complexity. Polar residues-rich tracts occupy residues 483–500 (QTESTMKNTSTRPLQSKS) and 538–553 (NKNQRQQLSRQQTESA). Basic and acidic residues-rich tracts occupy residues 569–584 (SEDRLSDESSDLRSLR) and 605–616 (YERNSDITEQHT).

Interacts (via C-terminus) with TON1A and TON1B. As to expression, expressed in roots, petioles, leaf blades and floral organs.

The protein localises to the nucleus. Functionally, in association with LNG2, regulates leaf morphology by promoting longitudinal polar cell elongation independently of ROT3. The polypeptide is Protein LONGIFOLIA 1 (LNG1) (Arabidopsis thaliana (Mouse-ear cress)).